The following is a 129-amino-acid chain: Fluoride-specific ion channel FluC (129 aa).

3 consecutive transmembrane segments (helical) span residues 20-40 (WFLGLMLNAIFLPIPLGTLAA), 67-87 (LLIITGFLGGLTTFSTFTAEI), and 96-116 (IMTAVAAIVLHVCGSLIMMLL). Na(+) contacts are provided by Gly75 and Thr78.

It belongs to the fluoride channel Fluc/FEX (TC 1.A.43) family.

It is found in the cell inner membrane. The catalysed reaction is fluoride(in) = fluoride(out). With respect to regulation, na(+) is not transported, but it plays an essential structural role and its presence is essential for fluoride channel function. In terms of biological role, fluoride-specific ion channel. Important for reducing fluoride concentration in the cell, thus reducing its toxicity. In Desulfovibrio desulfuricans (strain ATCC 27774 / DSM 6949 / MB), this protein is Fluoride-specific ion channel FluC.